Consider the following 390-residue polypeptide: DNA polymerase IV (390 aa).

The UmuC domain maps to 6-187; sequence VMHVDLDAFF…LDIAVMPGIG (182 aa). Mg(2+) is bound by residues D10 and D105. The active site involves E106.

This sequence belongs to the DNA polymerase type-Y family. As to quaternary structure, monomer. Requires Mg(2+) as cofactor.

The protein resides in the cytoplasm. The enzyme catalyses DNA(n) + a 2'-deoxyribonucleoside 5'-triphosphate = DNA(n+1) + diphosphate. Poorly processive, error-prone DNA polymerase involved in untargeted mutagenesis. Copies undamaged DNA at stalled replication forks, which arise in vivo from mismatched or misaligned primer ends. These misaligned primers can be extended by PolIV. Exhibits no 3'-5' exonuclease (proofreading) activity. May be involved in translesional synthesis, in conjunction with the beta clamp from PolIII. The polypeptide is DNA polymerase IV (Dehalococcoides mccartyi (strain CBDB1)).